Reading from the N-terminus, the 581-residue chain is Phosphatidylinositol N-acetylglucosaminyltransferase subunit Q (581 aa).

The next 5 helical transmembrane spans lie at 276–298 (ANML…WLHS), 344–366 (LGRF…SPFI), 381–403 (LTVA…YCFY), 446–468 (LFIG…LYYL), and 478–500 (ITVQ…YSLG).

The protein belongs to the PIGQ family. As to quaternary structure, component of the glycosylphosphatidylinositol-N-acetylglucosaminyltransferase (GPI-GnT) complex composed at least by PIGA, PIGC, PIGH, PIGP, PIGQ, PIGY and DPM2. Interacts with PIGA, PIGH and PIGC.

It is found in the membrane. Its pathway is glycolipid biosynthesis; glycosylphosphatidylinositol-anchor biosynthesis. In terms of biological role, part of the glycosylphosphatidylinositol-N-acetylglucosaminyltransferase (GPI-GnT) complex that catalyzes the transfer of N-acetylglucosamine from UDP-N-acetylglucosamine to phosphatidylinositol and participates in the first step of GPI biosynthesis. This is Phosphatidylinositol N-acetylglucosaminyltransferase subunit Q from Mus musculus (Mouse).